We begin with the raw amino-acid sequence, 957 residues long: Collagen alpha-1(I) chain (957 aa).

A disordered region spans residues 1 to 957 (GPMGPSGPRG…PGPPGPPGPP (957 aa)). The span at 23–33 (FPGEPGASGPM) shows a compositional bias: low complexity. Basic and acidic residues predominate over residues 45–59 (NGDDGEAGKPGRPGE). Position 87 is a phosphoserine (S87). Low complexity-rich tracts occupy residues 95–113 (DAGP…PRGI) and 125–138 (PAGA…TGAA). Pro residues predominate over residues 140-152 (PPGPTGPAGPPGF). Composition is skewed to low complexity over residues 186–210 (AGAA…RGPS) and 219–228 (SGPKGNSGEP). Over residues 277–286 (GERGGPGSRG) the composition is skewed to gly residues. 8 stretches are compositionally biased toward low complexity: residues 330-356 (KGIT…QDGR), 365-384 (ARGQ…AGEP), 426-453 (QGPA…PGEQ), 488-516 (PRGA…QGAP), 576-590 (AGPS…ARGA), 603-618 (AGFA…PGAK), 649-665 (SAGP…AGRV), and 707-731 (AGEK…QGIA). Phosphoserine is present on S579. 2 stretches are compositionally biased toward pro residues: residues 772 to 782 (PPGPMGPPGIA) and 818 to 833 (AGPP…PGPV). Residues 854–868 (IGPVGARGAAGPQGP) show a composition bias toward low complexity. Residues 869 to 883 (RGDKGETGEQGDRGI) show a composition bias toward basic and acidic residues. Positions 902–935 (PGEQGPSGASGPAGPRGPPGSAGSPGKDGINGIP) are enriched in low complexity. Residues 937–957 (PIGPPGPRPGPPGPPGPPGPP) show a composition bias toward pro residues.

Belongs to the fibrillar collagen family. In terms of assembly, trimers of one alpha 2(I) and two alpha 1(I) chains. In terms of processing, prolines at the third position of the tripeptide repeating unit (G-X-Y) are hydroxylated in some or all of the chains. Forms the fibrils of tendon, ligaments and bones. In bones, the fibrils are mineralized with calcium hydroxyapatite.

Its subcellular location is the secreted. The protein localises to the extracellular space. It localises to the extracellular matrix. Type I collagen is a member of group I collagen (fibrillar forming collagen). The chain is Collagen alpha-1(I) chain from Hippopotamus amphibius (Hippopotamus).